The following is a 173-amino-acid chain: MAIILGVDPGSRITGYGVIQCQGRQQLYLGSGCIRTSGDDLPLKLKQIFDGISEIIRQYQPDEFAIERVFLAKNADSALKLGQARGAAIVAATVANLPVAEYSATQIKSAVVGTGRAKKEQVQHMIQQLLKLPAAPQADAADALGVAVCHYHTNQSLVALSGRATTRTYGRYR.

Catalysis depends on residues Asp8, Glu67, and Asp139. Asp8, Glu67, and Asp139 together coordinate Mg(2+).

Belongs to the RuvC family. Homodimer which binds Holliday junction (HJ) DNA. The HJ becomes 2-fold symmetrical on binding to RuvC with unstacked arms; it has a different conformation from HJ DNA in complex with RuvA. In the full resolvosome a probable DNA-RuvA(4)-RuvB(12)-RuvC(2) complex forms which resolves the HJ. Mg(2+) is required as a cofactor.

It is found in the cytoplasm. It carries out the reaction Endonucleolytic cleavage at a junction such as a reciprocal single-stranded crossover between two homologous DNA duplexes (Holliday junction).. In terms of biological role, the RuvA-RuvB-RuvC complex processes Holliday junction (HJ) DNA during genetic recombination and DNA repair. Endonuclease that resolves HJ intermediates. Cleaves cruciform DNA by making single-stranded nicks across the HJ at symmetrical positions within the homologous arms, yielding a 5'-phosphate and a 3'-hydroxyl group; requires a central core of homology in the junction. The consensus cleavage sequence is 5'-(A/T)TT(C/G)-3'. Cleavage occurs on the 3'-side of the TT dinucleotide at the point of strand exchange. HJ branch migration catalyzed by RuvA-RuvB allows RuvC to scan DNA until it finds its consensus sequence, where it cleaves and resolves the cruciform DNA. The chain is Crossover junction endodeoxyribonuclease RuvC from Shewanella oneidensis (strain ATCC 700550 / JCM 31522 / CIP 106686 / LMG 19005 / NCIMB 14063 / MR-1).